Reading from the N-terminus, the 335-residue chain is Phosphatidate cytidylyltransferase, mitochondrial (335 aa).

It belongs to the TAM41 family. Mg(2+) serves as cofactor.

Its subcellular location is the mitochondrion inner membrane. The enzyme catalyses a 1,2-diacyl-sn-glycero-3-phosphate + CTP + H(+) = a CDP-1,2-diacyl-sn-glycerol + diphosphate. The protein operates within phospholipid metabolism; CDP-diacylglycerol biosynthesis; CDP-diacylglycerol from sn-glycerol 3-phosphate: step 3/3. In terms of biological role, catalyzes the conversion of phosphatidic acid (PA) to CDP-diacylglycerol (CDP-DAG), an essential intermediate in the synthesis of phosphatidylglycerol, cardiolipin and phosphatidylinositol. In Bos taurus (Bovine), this protein is Phosphatidate cytidylyltransferase, mitochondrial (TAMM41).